Consider the following 206-residue polypeptide: LexA repressor (206 aa).

A DNA-binding region (H-T-H motif) is located at residues 27–47 (YEEIRQNLGFRSLNAVFKHLK). Catalysis depends on for autocatalytic cleavage activity residues Ser-120 and Lys-157.

This sequence belongs to the peptidase S24 family. As to quaternary structure, homodimer.

It carries out the reaction Hydrolysis of Ala-|-Gly bond in repressor LexA.. Its function is as follows. Represses a number of genes involved in the response to DNA damage (SOS response), including recA and lexA. In the presence of single-stranded DNA, RecA interacts with LexA causing an autocatalytic cleavage which disrupts the DNA-binding part of LexA, leading to derepression of the SOS regulon and eventually DNA repair. The sequence is that of LexA repressor from Syntrophobacter fumaroxidans (strain DSM 10017 / MPOB).